We begin with the raw amino-acid sequence, 392 residues long: GPI alpha-1,4-mannosyltransferase I, catalytic subunit (392 aa).

The Cytoplasmic portion of the chain corresponds to 1–4 (MEAR). Residues 5 to 25 (VCVLFGAAALLRLLLLCVGVY) form a helical membrane-spanning segment. Residues 26 to 65 (QDQTLKLKYTDVDYHVFTDAARFITQGESPYRRSTFRYTP) lie on the Lumenal side of the membrane. A helical transmembrane segment spans residues 66-86 (LLALLLVPNVYLSLLFGKLLF). The Cytoplasmic portion of the chain corresponds to 87 to 125 (GFCDLLSGLLMFRLLVLRGASHGSACVSCGLWLLNPLPM). The chain crosses the membrane as a helical span at residues 126-148 (AVSTRGNAESVLAVLVLSTLLCL). Over 149-156 (QLRKHTTA) the chain is Lumenal. Residues 157 to 177 (ALLFGLSVHMKIYPVTYALPI) form a helical membrane-spanning segment. Over 178–198 (ALALTAAPARGRGVLLRFFSP) the chain is Cytoplasmic. Residues 199-219 (ALLRFAAVSAAVFLSLGLIFY) traverse the membrane as a helical segment. Residues 220-261 (CRYGWEFLQEAYLYHLTRRDLRHNFSPFFYLQYVCAERCWSS) are Lumenal-facing. The helical transmembrane segment at 262 to 282 (GLLPLLLLPQLLLLLLASAAF) threads the bilayer. The Cytoplasmic portion of the chain corresponds to 283 to 302 (SSDLPFCCFLHTAVFVSFNR). Residues 303 to 323 (VCTSQYFLWYLCLLPVVLPRL) form a helical membrane-spanning segment. Residues 324-330 (RLRLGRG) lie on the Lumenal side of the membrane. The helical transmembrane segment at 331–351 (LLLLLLWLLLQGLWLAPAYLL) threads the bilayer. At 352–360 (EFQGWNSFS) the chain is on the cytoplasmic side. The chain crosses the membrane as a helical span at residues 361 to 381 (WIWAASLLFLLTNTFILAQII). Residues 382 to 392 (QHYRPHDRKAD) are Lumenal-facing.

The protein belongs to the PIGM family. In terms of assembly, part of the glycosylphosphatidylinositol-mannosyltransferase I complex that is composed of PIGM and PIGX.

It is found in the endoplasmic reticulum membrane. It participates in glycolipid biosynthesis; glycosylphosphatidylinositol-anchor biosynthesis. Catalytic subunit of the glycosylphosphatidylinositol-mannosyltransferase I complex which catalyzes the transfer of the first mannose, via an alpha-1,4 bond from a dolichol-phosphate-mannose (Dol-P-Man) to the glucosaminyl acyl phosphatidylinositol (GlcN-(acyl)PI) intermediate to generate alpha-D-Man-(1-&gt;4)-alpha-D-GlcN-(1-&gt;6)-(1-radyl,2-acyl-sn-glycero-3-phospho)-2-acyl-inositol and participates in the sixth step of the glycosylphosphatidylinositol-anchor biosynthesis. The sequence is that of GPI alpha-1,4-mannosyltransferase I, catalytic subunit from Danio rerio (Zebrafish).